We begin with the raw amino-acid sequence, 191 residues long: NAD(P)H-quinone oxidoreductase subunit L, chloroplastic (191 aa).

The transit peptide at M1–N46 directs the protein to the chloroplast. Helical transmembrane passes span T61–I81, V93–M113, and Y129–L149.

This sequence belongs to the NDH complex subunit L family. Part of the chloroplast NDH complex, composed of a mixture of chloroplast and nucleus encoded subunits. Component of the NDH subcomplex A, at least composed of ndhH, ndhI, ndhJ, ndhK, ndhL, ndhM, ndhN and ndhO.

It is found in the plastid. Its subcellular location is the chloroplast thylakoid membrane. It catalyses the reaction a plastoquinone + NADH + (n+1) H(+)(in) = a plastoquinol + NAD(+) + n H(+)(out). The catalysed reaction is a plastoquinone + NADPH + (n+1) H(+)(in) = a plastoquinol + NADP(+) + n H(+)(out). NDH shuttles electrons from NAD(P)H:plastoquinone, via FMN and iron-sulfur (Fe-S) centers, to quinones in the photosynthetic chain and possibly in a chloroplast respiratory chain. The immediate electron acceptor for the enzyme in this species is believed to be plastoquinone. Couples the redox reaction to proton translocation, and thus conserves the redox energy in a proton gradient. The chain is NAD(P)H-quinone oxidoreductase subunit L, chloroplastic from Arabidopsis thaliana (Mouse-ear cress).